Consider the following 228-residue polypeptide: MVENIALLPEFAAQYPFLWGSFLFLSGLAFGSFFNVVIHRLPLMMEQAEGINLCFPASFCPQCREPIAWRDNIPLLGFLFLKGRSRCCGQPISPRYPLMELATGALFVLAGYLMAPGVPLLGGLILLSLLLILAAIDAQTQLLPDGLTLPLMWAGLLFNLSATYVPLAEAVVGAMAGYLSLWSVYWVFRLLSGKEALGYGDFKLLAALGAWLGWQALPQTLLLASPAA.

A run of 6 helical transmembrane segments spans residues 18–38, 95–115, 116–136, 147–167, 168–188, and 204–224; these read LWGSFLFLSGLAFGSFFNVVI, RYPLMELATGALFVLAGYLMA, PGVPLLGGLILLSLLLILAAI, LTLPLMWAGLLFNLSATYVPL, AEAVVGAMAGYLSLWSVYWVF, and LLAALGAWLGWQALPQTLLLA.

Belongs to the peptidase A24 family.

The protein resides in the cell inner membrane. The catalysed reaction is Typically cleaves a -Gly-|-Phe- bond to release an N-terminal, basic peptide of 5-8 residues from type IV prepilin, and then N-methylates the new N-terminal amino group, the methyl donor being S-adenosyl-L-methionine.. Functionally, plays an essential role in type IV pili and type II pseudopili formation by proteolytically removing the leader sequence from substrate proteins and subsequently monomethylating the alpha-amino group of the newly exposed N-terminal phenylalanine. This Klebsiella pneumoniae protein is Prepilin leader peptidase/N-methyltransferase (pulO).